Here is a 298-residue protein sequence, read N- to C-terminus: ATP phosphoribosyltransferase (298 aa).

It belongs to the ATP phosphoribosyltransferase family. Long subfamily. Mg(2+) is required as a cofactor.

It localises to the cytoplasm. It catalyses the reaction 1-(5-phospho-beta-D-ribosyl)-ATP + diphosphate = 5-phospho-alpha-D-ribose 1-diphosphate + ATP. The protein operates within amino-acid biosynthesis; L-histidine biosynthesis; L-histidine from 5-phospho-alpha-D-ribose 1-diphosphate: step 1/9. Its activity is regulated as follows. Feedback inhibited by histidine. Catalyzes the condensation of ATP and 5-phosphoribose 1-diphosphate to form N'-(5'-phosphoribosyl)-ATP (PR-ATP). Has a crucial role in the pathway because the rate of histidine biosynthesis seems to be controlled primarily by regulation of HisG enzymatic activity. The chain is ATP phosphoribosyltransferase from Aeromonas hydrophila subsp. hydrophila (strain ATCC 7966 / DSM 30187 / BCRC 13018 / CCUG 14551 / JCM 1027 / KCTC 2358 / NCIMB 9240 / NCTC 8049).